We begin with the raw amino-acid sequence, 96 residues long: UPF0235 protein YE3436 (96 aa).

It belongs to the UPF0235 family.

The polypeptide is UPF0235 protein YE3436 (Yersinia enterocolitica serotype O:8 / biotype 1B (strain NCTC 13174 / 8081)).